Reading from the N-terminus, the 171-residue chain is NADH-quinone oxidoreductase subunit C (171 aa).

It belongs to the complex I 30 kDa subunit family. NDH-1 is composed of 14 different subunits. Subunits NuoB, C, D, E, F, and G constitute the peripheral sector of the complex.

It is found in the cell membrane. It catalyses the reaction a quinone + NADH + 5 H(+)(in) = a quinol + NAD(+) + 4 H(+)(out). Functionally, NDH-1 shuttles electrons from NADH, via FMN and iron-sulfur (Fe-S) centers, to quinones in the respiratory chain. The immediate electron acceptor for the enzyme in this species is believed to be ubiquinone. Couples the redox reaction to proton translocation (for every two electrons transferred, four hydrogen ions are translocated across the cytoplasmic membrane), and thus conserves the redox energy in a proton gradient. In Herpetosiphon aurantiacus (strain ATCC 23779 / DSM 785 / 114-95), this protein is NADH-quinone oxidoreductase subunit C.